A 547-amino-acid polypeptide reads, in one-letter code: Glucose-6-phosphate isomerase 2 (547 aa).

The Proton donor role is filled by glutamate 351. Catalysis depends on residues histidine 382 and lysine 508.

It belongs to the GPI family.

It localises to the cytoplasm. It carries out the reaction alpha-D-glucose 6-phosphate = beta-D-fructose 6-phosphate. The protein operates within carbohydrate biosynthesis; gluconeogenesis. It functions in the pathway carbohydrate degradation; glycolysis; D-glyceraldehyde 3-phosphate and glycerone phosphate from D-glucose: step 2/4. Functionally, catalyzes the reversible isomerization of glucose-6-phosphate to fructose-6-phosphate. This is Glucose-6-phosphate isomerase 2 from Neisseria meningitidis serogroup A / serotype 4A (strain DSM 15465 / Z2491).